The sequence spans 75 residues: Sperm-specific protein PL-I (75 aa).

In terms of domain architecture, H15 spans 2-74; the sequence is GSSGMMSMVA…GSAGWVLVPK (73 aa).

Belongs to the histone H1/H5 family. In terms of tissue distribution, sperm.

It is found in the nucleus. It localises to the chromosome. In terms of biological role, linker histones are implicated in chromatin remodeling and/or transcriptional regulation during spermiogenesis, the process of spermatid maturation into spermatozoa. The protein is Sperm-specific protein PL-I of Spisula solidissima (Atlantic surf-clam).